Reading from the N-terminus, the 241-residue chain is MATNAKPVYKRILLKLSGEALQGTEGFGIDASILDRMAQEIKELVELGIQVGVVIGGGNLFRGAGLAKAGMNRVVGDHMGMLATVMNGLAMRDALHRAYVNARLMSAIPLNGVCDSYSWAEAISLLRNNRVVILSAGTGNPFFTTDSAACLRGIEIEADVVLKATKVDGVFTADPAKDPTATMYEQLTYSEVLEKELKVMDLAAFTLARDHKLPIRVFNMNKPGALRRVVMGEKEGTLITE.

Lys-15–Gly-18 contacts ATP. An involved in allosteric activation by GTP region spans residues Gly-23–Gly-28. Residue Gly-57 coordinates UMP. Gly-58 and Arg-62 together coordinate ATP. Residues Asp-77 and Thr-138 to Thr-145 contribute to the UMP site. ATP contacts are provided by Thr-165, Phe-171, and Asp-174.

It belongs to the UMP kinase family. Homohexamer.

Its subcellular location is the cytoplasm. The catalysed reaction is UMP + ATP = UDP + ADP. The protein operates within pyrimidine metabolism; CTP biosynthesis via de novo pathway; UDP from UMP (UMPK route): step 1/1. With respect to regulation, allosterically activated by GTP. Inhibited by UTP. Its function is as follows. Catalyzes the reversible phosphorylation of UMP to UDP. The sequence is that of Uridylate kinase from Escherichia coli O139:H28 (strain E24377A / ETEC).